We begin with the raw amino-acid sequence, 254 residues long: tRNA (guanine-N(1)-)-methyltransferase (254 aa).

S-adenosyl-L-methionine contacts are provided by residues glycine 112 and 131-136; that span reads IGDYIL.

Belongs to the RNA methyltransferase TrmD family. Homodimer.

It is found in the cytoplasm. The catalysed reaction is guanosine(37) in tRNA + S-adenosyl-L-methionine = N(1)-methylguanosine(37) in tRNA + S-adenosyl-L-homocysteine + H(+). Functionally, specifically methylates guanosine-37 in various tRNAs. This chain is tRNA (guanine-N(1)-)-methyltransferase, found in Sulfurihydrogenibium sp. (strain YO3AOP1).